The primary structure comprises 356 residues: DNA polymerase IV (356 aa).

Positions 7–188 (IIHIDMDCFY…LPLKKIPGVG (182 aa)) constitute a UmuC domain. Positions 11 and 106 each coordinate Mg(2+). Glu-107 is an active-site residue.

Belongs to the DNA polymerase type-Y family. Monomer. Mg(2+) serves as cofactor.

It localises to the cytoplasm. The catalysed reaction is DNA(n) + a 2'-deoxyribonucleoside 5'-triphosphate = DNA(n+1) + diphosphate. Functionally, poorly processive, error-prone DNA polymerase involved in untargeted mutagenesis. Copies undamaged DNA at stalled replication forks, which arise in vivo from mismatched or misaligned primer ends. These misaligned primers can be extended by PolIV. Exhibits no 3'-5' exonuclease (proofreading) activity. May be involved in translesional synthesis, in conjunction with the beta clamp from PolIII. This Actinobacillus pleuropneumoniae serotype 3 (strain JL03) protein is DNA polymerase IV.